Consider the following 329-residue polypeptide: 4-hydroxythreonine-4-phosphate dehydrogenase (329 aa).

Residues His136 and Thr137 each coordinate substrate. A divalent metal cation contacts are provided by His166, His211, and His266. Lys274, Asn283, and Arg292 together coordinate substrate.

The protein belongs to the PdxA family. Homodimer. The cofactor is Zn(2+). Requires Mg(2+) as cofactor. Co(2+) is required as a cofactor.

It localises to the cytoplasm. It carries out the reaction 4-(phosphooxy)-L-threonine + NAD(+) = 3-amino-2-oxopropyl phosphate + CO2 + NADH. It participates in cofactor biosynthesis; pyridoxine 5'-phosphate biosynthesis; pyridoxine 5'-phosphate from D-erythrose 4-phosphate: step 4/5. Catalyzes the NAD(P)-dependent oxidation of 4-(phosphooxy)-L-threonine (HTP) into 2-amino-3-oxo-4-(phosphooxy)butyric acid which spontaneously decarboxylates to form 3-amino-2-oxopropyl phosphate (AHAP). The protein is 4-hydroxythreonine-4-phosphate dehydrogenase of Escherichia coli (strain 55989 / EAEC).